A 162-amino-acid chain; its full sequence is MSDKIGLFTGSFDPMTNGHLDIIERASRLFDKLYVGIFFNPHKQGFLPLENRKRGLEKALGHLENVEVVASHDELVVDVAKRLGATCLVRGLRNASDLQYEASFDYYNHQLSSDIETIYLHSRPEHLYISSSGVRELLKFGRDIACYVPESILEEIRNEKKD.

Serine 11 is a binding site for substrate. ATP is bound by residues 11-12 and histidine 19; that span reads SF. Substrate is bound by residues lysine 43, valine 76, and arginine 90. Residues 91 to 93, glutamate 101, and 126 to 132 each bind ATP; these read GLR and HLYISSS.

This sequence belongs to the bacterial CoaD family. In terms of assembly, homohexamer. Mg(2+) serves as cofactor.

It localises to the cytoplasm. The catalysed reaction is (R)-4'-phosphopantetheine + ATP + H(+) = 3'-dephospho-CoA + diphosphate. It participates in cofactor biosynthesis; coenzyme A biosynthesis; CoA from (R)-pantothenate: step 4/5. In terms of biological role, reversibly transfers an adenylyl group from ATP to 4'-phosphopantetheine, yielding dephospho-CoA (dPCoA) and pyrophosphate. The protein is Phosphopantetheine adenylyltransferase of Streptococcus pneumoniae (strain JJA).